We begin with the raw amino-acid sequence, 464 residues long: Glutamyl-tRNA reductase (464 aa).

Substrate contacts are provided by residues 47–50, Ser-145, 150–152, and Gln-156; these read TCNR and EPQ. The Nucleophile role is filled by Cys-48. 225–230 provides a ligand contact to NADP(+); sequence AAGEMN.

Belongs to the glutamyl-tRNA reductase family. Homodimer.

The catalysed reaction is (S)-4-amino-5-oxopentanoate + tRNA(Glu) + NADP(+) = L-glutamyl-tRNA(Glu) + NADPH + H(+). It functions in the pathway porphyrin-containing compound metabolism; protoporphyrin-IX biosynthesis; 5-aminolevulinate from L-glutamyl-tRNA(Glu): step 1/2. Its function is as follows. Catalyzes the NADPH-dependent reduction of glutamyl-tRNA(Glu) to glutamate 1-semialdehyde (GSA). In Psychrobacter cryohalolentis (strain ATCC BAA-1226 / DSM 17306 / VKM B-2378 / K5), this protein is Glutamyl-tRNA reductase.